Reading from the N-terminus, the 423-residue chain is Histidine--tRNA ligase (423 aa).

The protein belongs to the class-II aminoacyl-tRNA synthetase family. Homodimer.

The protein resides in the cytoplasm. It carries out the reaction tRNA(His) + L-histidine + ATP = L-histidyl-tRNA(His) + AMP + diphosphate + H(+). The sequence is that of Histidine--tRNA ligase (hisS) from Mycobacterium bovis (strain ATCC BAA-935 / AF2122/97).